Reading from the N-terminus, the 386-residue chain is ABC transporter permease protein NatB (386 aa).

The next 6 helical transmembrane spans lie at 19–39 (TILL…FFYE), 172–192 (AIML…SGAM), 226–246 (WLAV…FLIL), 273–293 (ALII…ISIM), 300–320 (AQSY…FIFS), and 353–373 (ATIL…FLLA).

As to quaternary structure, the complex is composed of NatA and NatB.

The protein localises to the cell membrane. It carries out the reaction Na(+)(in) + ATP + H2O = Na(+)(out) + ADP + phosphate + H(+). Its function is as follows. Part of an ABC transporter that catalyzes ATP-dependent electrogenic sodium extrusion. In Bacillus subtilis (strain 168), this protein is ABC transporter permease protein NatB.